The following is a 245-amino-acid chain: Cysteine-rich secretory protein 3 (245 aa).

Residues 1–20 (MTLFPVLLFLVAGLLPSFPA) form the signal peptide. In terms of domain architecture, SCP spans 43 to 171 (VNKHNELRRA…VLKYYYVCQY (129 aa)). 5 cysteine pairs are disulfide-bonded: C191–C198, C194–C203, C207–C240, C216–C234, and C225–C238. Positions 207-240 (CKYEDLYSNCKSLKLTLTCKHQLVRDSCKASCNC) constitute a ShKT domain. N239 carries an N-linked (GlcNAc...) asparagine glycan.

This sequence belongs to the CRISP family. Interacts with A1BG. In terms of tissue distribution, salivary gland, pancreas and prostate &gt; epididymis, ovary, thymus and colon.

The protein localises to the secreted. This is Cysteine-rich secretory protein 3 (CRISP3) from Homo sapiens (Human).